Reading from the N-terminus, the 409-residue chain is Evolutionarily conserved signaling intermediate in Toll pathway, mitochondrial (409 aa).

Residues 1 to 26 constitute a mitochondrion transit peptide; that stretch reads MLRRAQCLLRLHGNGGHSLVSRFRNY. Disordered stretches follow at residues 27–53 and 383–409; these read ATDEGNPKQNPNPNPRAQKPGTKNLPA and EEIEGGASVPATSDNSSQDEHISSRQK. A compositionally biased stretch (basic and acidic residues) spans 400–409; that stretch reads QDEHISSRQK.

The protein belongs to the ECSIT family. Interacts with Traf6. Associates with mitochondrial complex I assembly intermediates during its biogenesis.

Its subcellular location is the cytoplasm. It localises to the nucleus. The protein localises to the mitochondrion. Its function is as follows. As part of the MCIA complex, involved in the assembly of the mitochondrial complex I. Involved in the innate immune response; promotes the production of antibacterial peptides. In Drosophila melanogaster (Fruit fly), this protein is Evolutionarily conserved signaling intermediate in Toll pathway, mitochondrial.